A 1605-amino-acid chain; its full sequence is Pentafunctional AROM polypeptide (1605 aa).

The segment at 1–384 (MTGPTKISIL…YEPRASVVPN (384 aa)) is 3-dehydroquinate synthase. NAD(+) contacts are provided by residues 44–46 (DTN), 81–84 (EVSK), 114–116 (GGV), and Asp-119. Residue Arg-130 coordinates 7-phospho-2-dehydro-3-deoxy-D-arabino-heptonate. 139-140 (TT) is a binding site for NAD(+). 7-phospho-2-dehydro-3-deoxy-D-arabino-heptonate-binding residues include Asp-146 and Lys-152. Lys-161 serves as a coordination point for NAD(+). Position 162 (Asn-162) interacts with 7-phospho-2-dehydro-3-deoxy-D-arabino-heptonate. NAD(+) contacts are provided by residues 179-182 (FLET) and Asn-190. Zn(2+) is bound at residue Glu-194. 7-phospho-2-dehydro-3-deoxy-D-arabino-heptonate-binding positions include 194-197 (EVIK) and Lys-250. Glu-260 acts as the Proton acceptor; for 3-dehydroquinate synthase activity in catalysis. 7-phospho-2-dehydro-3-deoxy-D-arabino-heptonate-binding positions include 264–268 (RNLLN) and His-271. His-271 lines the Zn(2+) pocket. His-275 serves as the catalytic Proton acceptor; for 3-dehydroquinate synthase activity. 7-phospho-2-dehydro-3-deoxy-D-arabino-heptonate contacts are provided by His-287 and Lys-356. His-287 serves as a coordination point for Zn(2+). Residues 397–842 (VHPGVSTTSE…WDTLRQKFAV (446 aa)) are EPSP synthase. Catalysis depends on Cys-824, which acts as the For EPSP synthase activity. The interval 864 to 1055 (SASVFIIGMR…KKKQHSFFVS (192 aa)) is shikimate kinase. 871 to 878 (GMRGAGKT) lines the ATP pocket. The tract at residues 1056 to 1276 (LTLPDVRGAD…AAPGQLSATD (221 aa)) is 3-dehydroquinase. The active-site Proton acceptor; for 3-dehydroquinate dehydratase activity is the His-1179. The active-site Schiff-base intermediate with substrate; for 3-dehydroquinate dehydratase activity is Lys-1207. The shikimate dehydrogenase stretch occupies residues 1289-1605 (KKRFALFGSP…LSGRTMLTCS (317 aa)).

The protein in the N-terminal section; belongs to the sugar phosphate cyclases superfamily. Dehydroquinate synthase family. This sequence in the 2nd section; belongs to the EPSP synthase family. It in the 3rd section; belongs to the shikimate kinase family. In the 4th section; belongs to the type-I 3-dehydroquinase family. The protein in the C-terminal section; belongs to the shikimate dehydrogenase family. In terms of assembly, homodimer. It depends on Zn(2+) as a cofactor.

Its subcellular location is the cytoplasm. The enzyme catalyses 7-phospho-2-dehydro-3-deoxy-D-arabino-heptonate = 3-dehydroquinate + phosphate. It carries out the reaction 3-dehydroquinate = 3-dehydroshikimate + H2O. The catalysed reaction is shikimate + NADP(+) = 3-dehydroshikimate + NADPH + H(+). It catalyses the reaction shikimate + ATP = 3-phosphoshikimate + ADP + H(+). The enzyme catalyses 3-phosphoshikimate + phosphoenolpyruvate = 5-O-(1-carboxyvinyl)-3-phosphoshikimate + phosphate. Its pathway is metabolic intermediate biosynthesis; chorismate biosynthesis; chorismate from D-erythrose 4-phosphate and phosphoenolpyruvate: step 2/7. The protein operates within metabolic intermediate biosynthesis; chorismate biosynthesis; chorismate from D-erythrose 4-phosphate and phosphoenolpyruvate: step 3/7. It functions in the pathway metabolic intermediate biosynthesis; chorismate biosynthesis; chorismate from D-erythrose 4-phosphate and phosphoenolpyruvate: step 4/7. It participates in metabolic intermediate biosynthesis; chorismate biosynthesis; chorismate from D-erythrose 4-phosphate and phosphoenolpyruvate: step 5/7. Its pathway is metabolic intermediate biosynthesis; chorismate biosynthesis; chorismate from D-erythrose 4-phosphate and phosphoenolpyruvate: step 6/7. Its function is as follows. The AROM polypeptide catalyzes 5 consecutive enzymatic reactions in prechorismate polyaromatic amino acid biosynthesis. The protein is Pentafunctional AROM polypeptide of Aspergillus fumigatus (strain CBS 144.89 / FGSC A1163 / CEA10) (Neosartorya fumigata).